Consider the following 41-residue polypeptide: Large ribosomal subunit protein bL36 (41 aa).

This sequence belongs to the bacterial ribosomal protein bL36 family.

The polypeptide is Large ribosomal subunit protein bL36 (Ruegeria sp. (strain TM1040) (Silicibacter sp.)).